Here is a 230-residue protein sequence, read N- to C-terminus: MSKNIVVAPSILSADFSRLGEEIKAVDEAGADWIHVDVMDGRFVPNITIGPLIVDAIRPLTKKTLDVHLMIVEPEKYVEDFAKAGADIISVHVEHNASPHLHRTLCQIRELGKKAGAVLNPSTPLDFLEYVLPVCDLILIMSVNPGFGGQSFIPEVLPKIRALRQMCDERGLDPWIEVDGGLKPNNTWQVLEAGANAIVAGSAVFNAPNYAEAIAGVRNSKRPEPQLATV.

Ser10 contributes to the substrate binding site. A divalent metal cation contacts are provided by His35, Asp37, and His68. The active-site Proton acceptor is the Asp37. Substrate-binding positions include His68, 146-149 (GFGG), 179-181 (DGG), and 201-202 (GS). A divalent metal cation is bound at residue Asp179. Asp179 serves as the catalytic Proton donor.

The protein belongs to the ribulose-phosphate 3-epimerase family. As to quaternary structure, homohexamer. Requires a divalent metal cation as cofactor.

It carries out the reaction D-ribulose 5-phosphate = D-xylulose 5-phosphate. It participates in carbohydrate degradation. Functionally, catalyzes the reversible epimerization of D-ribulose 5-phosphate to D-xylulose 5-phosphate. The polypeptide is Ribulose-phosphate 3-epimerase (Synechocystis sp. (strain ATCC 27184 / PCC 6803 / Kazusa)).